The primary structure comprises 234 residues: Demethylmenaquinone methyltransferase (234 aa).

Residues T58, D79, and 106–107 contribute to the S-adenosyl-L-methionine site; that span reads NA.

Belongs to the class I-like SAM-binding methyltransferase superfamily. MenG/UbiE family.

It carries out the reaction a 2-demethylmenaquinol + S-adenosyl-L-methionine = a menaquinol + S-adenosyl-L-homocysteine + H(+). The protein operates within quinol/quinone metabolism; menaquinone biosynthesis; menaquinol from 1,4-dihydroxy-2-naphthoate: step 2/2. Methyltransferase required for the conversion of demethylmenaquinol (DMKH2) to menaquinol (MKH2). The sequence is that of Demethylmenaquinone methyltransferase from Bacillus pumilus (strain SAFR-032).